We begin with the raw amino-acid sequence, 163 residues long: Transcription antitermination protein NusB (163 aa).

Belongs to the NusB family.

In terms of biological role, involved in transcription antitermination. Required for transcription of ribosomal RNA (rRNA) genes. Binds specifically to the boxA antiterminator sequence of the ribosomal RNA (rrn) operons. This chain is Transcription antitermination protein NusB, found in Mycolicibacterium vanbaalenii (strain DSM 7251 / JCM 13017 / BCRC 16820 / KCTC 9966 / NRRL B-24157 / PYR-1) (Mycobacterium vanbaalenii).